A 130-amino-acid chain; its full sequence is Small ribosomal subunit protein uS8 (130 aa).

Belongs to the universal ribosomal protein uS8 family. Part of the 30S ribosomal subunit. Contacts proteins S5 and S12.

Functionally, one of the primary rRNA binding proteins, it binds directly to 16S rRNA central domain where it helps coordinate assembly of the platform of the 30S subunit. In Shigella boydii serotype 18 (strain CDC 3083-94 / BS512), this protein is Small ribosomal subunit protein uS8.